Here is a 258-residue protein sequence, read N- to C-terminus: tRNA pseudouridine synthase A (258 aa).

Catalysis depends on aspartate 52, which acts as the Nucleophile. Tyrosine 110 contributes to the substrate binding site.

This sequence belongs to the tRNA pseudouridine synthase TruA family. In terms of assembly, homodimer.

The enzyme catalyses uridine(38/39/40) in tRNA = pseudouridine(38/39/40) in tRNA. Formation of pseudouridine at positions 38, 39 and 40 in the anticodon stem and loop of transfer RNAs. The polypeptide is tRNA pseudouridine synthase A (Francisella tularensis subsp. holarctica (strain FTNF002-00 / FTA)).